Reading from the N-terminus, the 337-residue chain is 4-hydroxyproline 2-epimerase 2 (337 aa).

C90 functions as the Proton acceptor in the catalytic mechanism. Substrate contacts are provided by residues 91 to 92 (GH), H223, and D249. Catalysis depends on C253, which acts as the Proton donor. 254–255 (GT) lines the substrate pocket.

It belongs to the proline racemase family.

The catalysed reaction is trans-4-hydroxy-L-proline = cis-4-hydroxy-D-proline. Catalyzes the epimerization of trans-4-hydroxy-L-proline (t4LHyp) to cis-4-hydroxy-D-proline (c4DHyp). Is likely involved in a degradation pathway that converts t4LHyp to alpha-ketoglutarate. Can also catalyze the epimerization of trans-3-hydroxy-L-proline (t3LHyp) to cis-3-hydroxy-D-proline (c3DHyp), albeit with 170-fold lower efficiency. Displays no proline racemase activity. This is 4-hydroxyproline 2-epimerase 2 from Brucella anthropi (strain ATCC 49188 / DSM 6882 / CCUG 24695 / JCM 21032 / LMG 3331 / NBRC 15819 / NCTC 12168 / Alc 37) (Ochrobactrum anthropi).